The following is a 124-amino-acid chain: Alpha-endosulfine (124 aa).

The residue at position 74 (serine 74) is a Phosphoserine; by GWL. Residues 99–124 are disordered; the sequence is VTGDHIPTPQDLPQRKNTILTSKLAG. Residues 113–124 show a composition bias toward polar residues; the sequence is RKNTILTSKLAG.

This sequence belongs to the endosulfine family. In terms of processing, phosphorylation at Ser-74 by gwl during mitosis is essential for interaction with ppp2r2d (PR55-delta) and subsequent inactivation of PP2A.

It is found in the cytoplasm. In terms of biological role, protein phosphatase inhibitor that specifically inhibits protein phosphatase 2A (PP2A) during mitosis. When phosphorylated at Ser-67 during mitosis, specifically interacts with ppp2r2d (PR55-delta) and inhibits its activity, leading to inactivation of PP2A, an essential condition to keep cyclin-B1-CDK1 activity high during M phase. In Danio rerio (Zebrafish), this protein is Alpha-endosulfine (ensa).